Reading from the N-terminus, the 149-residue chain is Ribonuclease H (149 aa).

The region spanning 1-143 (MNAVEIYTDG…ADMLANRGVE (143 aa)) is the RNase H type-1 domain. The Mg(2+) site is built by Asp-9, Glu-47, Asp-69, and Asp-135.

This sequence belongs to the RNase H family. In terms of assembly, monomer. Mg(2+) is required as a cofactor.

The protein resides in the cytoplasm. It catalyses the reaction Endonucleolytic cleavage to 5'-phosphomonoester.. In terms of biological role, endonuclease that specifically degrades the RNA of RNA-DNA hybrids. In Albidiferax ferrireducens (strain ATCC BAA-621 / DSM 15236 / T118) (Rhodoferax ferrireducens), this protein is Ribonuclease H.